The sequence spans 204 residues: LexA repressor (204 aa).

A DNA-binding region (H-T-H motif) is located at residues 28–48 (RAEIANRLGFKSANAAEEHLK). Catalysis depends on for autocatalytic cleavage activity residues Ser121 and Lys158.

It belongs to the peptidase S24 family. Homodimer.

The enzyme catalyses Hydrolysis of Ala-|-Gly bond in repressor LexA.. Represses a number of genes involved in the response to DNA damage (SOS response), including recA and lexA. In the presence of single-stranded DNA, RecA interacts with LexA causing an autocatalytic cleavage which disrupts the DNA-binding part of LexA, leading to derepression of the SOS regulon and eventually DNA repair. In Shewanella frigidimarina (strain NCIMB 400), this protein is LexA repressor.